A 206-amino-acid chain; its full sequence is Protein GrpE (206 aa).

The span at 1-15 shows a compositional bias: polar residues; sequence MTDSNGQKDNNQDQA. The interval 1 to 38 is disordered; sequence MTDSNGQKDNNQDQAQPADPVVSKPYIMPDDPEEGTNE.

It belongs to the GrpE family. In terms of assembly, homodimer.

The protein resides in the cytoplasm. In terms of biological role, participates actively in the response to hyperosmotic and heat shock by preventing the aggregation of stress-denatured proteins, in association with DnaK and GrpE. It is the nucleotide exchange factor for DnaK and may function as a thermosensor. Unfolded proteins bind initially to DnaJ; upon interaction with the DnaJ-bound protein, DnaK hydrolyzes its bound ATP, resulting in the formation of a stable complex. GrpE releases ADP from DnaK; ATP binding to DnaK triggers the release of the substrate protein, thus completing the reaction cycle. Several rounds of ATP-dependent interactions between DnaJ, DnaK and GrpE are required for fully efficient folding. The polypeptide is Protein GrpE (Rhodopseudomonas palustris (strain BisB5)).